The chain runs to 688 residues: Glycine--tRNA ligase beta subunit (688 aa).

The protein belongs to the class-II aminoacyl-tRNA synthetase family. Tetramer of two alpha and two beta subunits.

The protein resides in the cytoplasm. It catalyses the reaction tRNA(Gly) + glycine + ATP = glycyl-tRNA(Gly) + AMP + diphosphate. The sequence is that of Glycine--tRNA ligase beta subunit from Lactobacillus delbrueckii subsp. bulgaricus (strain ATCC BAA-365 / Lb-18).